The sequence spans 1872 residues: Ral GTPase-activating protein subunit alpha-2 (1872 aa).

Residues 350–370 (DGAGSTEQDKSHSNSSTLSDR) form a disordered region. Ser-373, Ser-376, and Ser-379 each carry phosphoserine. Residues 445–469 (PDKKDVAQEDADKLGLSETDSKEAS) show a composition bias toward basic and acidic residues. The segment at 445 to 481 (PDKKDVAQEDADKLGLSETDSKEASSESSGHKRSSSW) is disordered. Ser-486 carries the post-translational modification Phosphoserine. At Ser-696 the chain carries Phosphoserine; by PKB. 2 disordered regions span residues 711–730 (FRSA…NTVR) and 758–813 (QQVP…GITM). Thr-715 is modified (phosphothreonine; by PKB). Composition is skewed to polar residues over residues 758 to 768 (QQVPRSSSTSD) and 775 to 795 (SDSS…SEPK). Positions 796 to 810 (SVQESKGHVTHEHEG) are enriched in basic and acidic residues. Residues Ser-819 and Ser-820 each carry the phosphoserine modification. The tract at residues 831 to 851 (QQAHGRCRQRQTSESTGSDTV) is disordered. Polar residues predominate over residues 840–849 (RQTSESTGSD). At Ser-1592 the chain carries Phosphoserine. Residues 1634-1842 (LKNLDSRQCR…EERALYLEAI (209 aa)) form the Rap-GAP domain.

As to quaternary structure, component of the heterodimeric RalGAP2 complex with RALGAPB. Heterodimerization is required for activity. As to expression, abundantly expressed in testis, pancreas, lung, thymus, brown fat, and white fat.

It is found in the cytoplasm. In terms of biological role, catalytic subunit of the heterodimeric RalGAP2 complex which acts as a GTPase activator for the Ras-like small GTPases RALA and RALB. The polypeptide is Ral GTPase-activating protein subunit alpha-2 (Ralgapa2) (Mus musculus (Mouse)).